Here is a 318-residue protein sequence, read N- to C-terminus: Sol locus transcriptional repressor (318 aa).

TPR repeat units follow at residues 65 to 98, 99 to 132, 133 to 166, and 167 to 199; these read ANAY…RPKT, INDV…QPNV, GISY…GSTN, and SVYR…EPEK.

In terms of biological role, transcriptional repressor of the sol locus (adhE/aad, ctfA, ctfB and adc) genes for butanol and acetone formation. This chain is Sol locus transcriptional repressor (solR), found in Clostridium acetobutylicum (strain ATCC 824 / DSM 792 / JCM 1419 / IAM 19013 / LMG 5710 / NBRC 13948 / NRRL B-527 / VKM B-1787 / 2291 / W).